Reading from the N-terminus, the 73-residue chain is Large ribosomal subunit protein bL31 (73 aa).

Positions 16, 18, 36, and 39 each coordinate Zn(2+).

This sequence belongs to the bacterial ribosomal protein bL31 family. Type A subfamily. Part of the 50S ribosomal subunit. Zn(2+) is required as a cofactor.

Functionally, binds the 23S rRNA. This chain is Large ribosomal subunit protein bL31, found in Citrifermentans bemidjiense (strain ATCC BAA-1014 / DSM 16622 / JCM 12645 / Bem) (Geobacter bemidjiensis).